The chain runs to 420 residues: Histidine--tRNA ligase (420 aa).

It belongs to the class-II aminoacyl-tRNA synthetase family. Homodimer.

It is found in the cytoplasm. The catalysed reaction is tRNA(His) + L-histidine + ATP = L-histidyl-tRNA(His) + AMP + diphosphate + H(+). This is Histidine--tRNA ligase from Clostridioides difficile (strain 630) (Peptoclostridium difficile).